We begin with the raw amino-acid sequence, 398 residues long: Phosphoglycerate kinase (398 aa).

Substrate is bound by residues 22–24, Arg38, 61–64, Arg120, and Arg153; these read DFN and HLGR. Residues Lys204, Glu326, and 352–355 contribute to the ATP site; that span reads GGDT.

Belongs to the phosphoglycerate kinase family. As to quaternary structure, monomer.

It localises to the cytoplasm. The catalysed reaction is (2R)-3-phosphoglycerate + ATP = (2R)-3-phospho-glyceroyl phosphate + ADP. It functions in the pathway carbohydrate degradation; glycolysis; pyruvate from D-glyceraldehyde 3-phosphate: step 2/5. The sequence is that of Phosphoglycerate kinase from Geobacter metallireducens (strain ATCC 53774 / DSM 7210 / GS-15).